The sequence spans 71 residues: Protein SlyX homolog (71 aa).

This sequence belongs to the SlyX family.

The protein is Protein SlyX homolog of Stutzerimonas stutzeri (strain A1501) (Pseudomonas stutzeri).